Reading from the N-terminus, the 303-residue chain is Crk-like protein (303 aa).

In terms of domain architecture, SH2 spans tryptophan 14–alanine 102. The SH3 1 domain occupies glutamate 123–arginine 183. Residue tyrosine 127 is modified to Phosphotyrosine. The disordered stretch occupies residues serine 184–alanine 204. Tyrosine 207 carries the post-translational modification Phosphotyrosine. An SH3 2 domain is found at asparagine 235–proline 296.

This sequence belongs to the CRK family. In terms of assembly, interacts with INPP5D/SHIP1. Interacts with DOCK2 and EPOR. Interacts with phosphorylated CBLB and IRS4. Interacts with BCAR1/CAS and NEDD9/HEF1.

Functionally, may mediate the transduction of intracellular signals. This chain is Crk-like protein, found in Rattus norvegicus (Rat).